The sequence spans 397 residues: Riboflavin biosynthesis protein RibBA (397 aa).

Positions 1-199 (MFHRIEEALE…IEDLIAYRRH (199 aa)) are DHBP synthase. D-ribulose 5-phosphate-binding positions include 26-27 (RE), D31, 138-142 (RAGHT), and E162. E27 is a Mg(2+) binding site. A Mg(2+)-binding site is contributed by H141. Residues 200–397 (HETLVTREVE…VNKLGHLLNL (198 aa)) are GTP cyclohydrolase II. 250 to 254 (RVHSE) provides a ligand contact to GTP. The Zn(2+) site is built by C255, C266, and C268. Residues Q271, 293-295 (EGR), and T315 contribute to the GTP site. D327 functions as the Proton acceptor; for GTP cyclohydrolase activity in the catalytic mechanism. Catalysis depends on R329, which acts as the Nucleophile; for GTP cyclohydrolase activity. Residues T350 and K355 each contribute to the GTP site.

It in the N-terminal section; belongs to the DHBP synthase family. The protein in the C-terminal section; belongs to the GTP cyclohydrolase II family. The cofactor is Mg(2+). Mn(2+) serves as cofactor. It depends on Zn(2+) as a cofactor.

It carries out the reaction D-ribulose 5-phosphate = (2S)-2-hydroxy-3-oxobutyl phosphate + formate + H(+). The enzyme catalyses GTP + 4 H2O = 2,5-diamino-6-hydroxy-4-(5-phosphoribosylamino)-pyrimidine + formate + 2 phosphate + 3 H(+). It participates in cofactor biosynthesis; riboflavin biosynthesis; 2-hydroxy-3-oxobutyl phosphate from D-ribulose 5-phosphate: step 1/1. It functions in the pathway cofactor biosynthesis; riboflavin biosynthesis; 5-amino-6-(D-ribitylamino)uracil from GTP: step 1/4. Catalyzes the conversion of D-ribulose 5-phosphate to formate and 3,4-dihydroxy-2-butanone 4-phosphate. Its function is as follows. Catalyzes the conversion of GTP to 2,5-diamino-6-ribosylamino-4(3H)-pyrimidinone 5'-phosphate (DARP), formate and pyrophosphate. The sequence is that of Riboflavin biosynthesis protein RibBA from Bacillus cereus (strain AH187).